Reading from the N-terminus, the 394-residue chain is GVGFKAGVKDYKLTYYTPEYQTKDTDILAAFRVTPQPGVPPEEAGAAVAAESSTGTWTTVWTDGLTSLDRYKGRCYHIEPVIGEENQYFCYVAYPLDLFEEGSVTNMFTSIVGNVFGFKALRALRLEDLRIPPAYSKTFQGPPHGIQVERDKLNKYGRPLLGCTIKPKLGLSAKNYGRAVYECLRGGLDFTKDDENVNSQPFMRWRDRFLFCAEAIYKSQAETGEIKGHYLNATAGTCEEMIKRAVFARELGVPIVMHDYLTGGFTANTTLAAYCRDNGLLLHIHRAMHAVIDRQKNHGMHFRVLAKALRMSGGDHIHSGTVVGKLEGDRQLTLGFVDLLRDDYIEKDRSRGIFFTQDWVSMPGVLPVASGGIHVWHMPALTEIFGDDSVLQFG.

K5 carries the N6,N6,N6-trimethyllysine modification. N114 and T164 together coordinate substrate. K166 serves as the catalytic Proton acceptor. Substrate is bound at residue K168. K192, D194, and E195 together coordinate Mg(2+). The residue at position 192 (K192) is an N6-carboxylysine. The active-site Proton acceptor is H285. Substrate contacts are provided by R286, H318, and S370.

The protein belongs to the RuBisCO large chain family. Type I subfamily. Heterohexadecamer of 8 large chains and 8 small chains; disulfide-linked. The disulfide link is formed within the large subunit homodimers. The cofactor is Mg(2+). Post-translationally, the disulfide bond which can form in the large chain dimeric partners within the hexadecamer appears to be associated with oxidative stress and protein turnover.

Its subcellular location is the plastid. It is found in the chloroplast. The catalysed reaction is 2 (2R)-3-phosphoglycerate + 2 H(+) = D-ribulose 1,5-bisphosphate + CO2 + H2O. It carries out the reaction D-ribulose 1,5-bisphosphate + O2 = 2-phosphoglycolate + (2R)-3-phosphoglycerate + 2 H(+). RuBisCO catalyzes two reactions: the carboxylation of D-ribulose 1,5-bisphosphate, the primary event in carbon dioxide fixation, as well as the oxidative fragmentation of the pentose substrate in the photorespiration process. Both reactions occur simultaneously and in competition at the same active site. This is Ribulose bisphosphate carboxylase large chain (rbcL) from Alisma plantago-aquatica (Common water-plantain).